Here is a 183-residue protein sequence, read N- to C-terminus: UPF0340 protein LCA_1354 (183 aa).

This sequence belongs to the UPF0340 family.

This Latilactobacillus sakei subsp. sakei (strain 23K) (Lactobacillus sakei subsp. sakei) protein is UPF0340 protein LCA_1354.